Consider the following 127-residue polypeptide: Small ribosomal subunit protein uS11 (127 aa).

Belongs to the universal ribosomal protein uS11 family. As to quaternary structure, part of the 30S ribosomal subunit. Interacts with proteins S7 and S18. Binds to IF-3.

Functionally, located on the platform of the 30S subunit, it bridges several disparate RNA helices of the 16S rRNA. Forms part of the Shine-Dalgarno cleft in the 70S ribosome. This Flavobacterium psychrophilum (strain ATCC 49511 / DSM 21280 / CIP 103535 / JIP02/86) protein is Small ribosomal subunit protein uS11.